We begin with the raw amino-acid sequence, 38 residues long: MTVYESLMIMINFGGLILNTVLLIFNIMMIVTSSQKKK.

Residues 11-31 (INFGGLILNTVLLIFNIMMIV) traverse the membrane as a helical segment.

It is found in the cell membrane. Functionally, toxic component of a type I toxin-antitoxin (TA) system; expression in the absence of cognate antisense antitoxin SR4 RNA leads to cell lysis. Induced expression causes membrane invaginations that dislocate the cell wall synthesis machinery, leading to eventual death. Unlike many type I TA systems it does not form pores. Base pairing occurs between the 3' UTRs of bsrG mRNA and SR4 RNA, which leads to initiation of degradation by RNase III (rnc) followed by the action of RNase Y (rny) and RNase R (rnr). Not toxic when expressed in E.coli. When induced during logarithmic growth it only slowly exerts its toxic effect. Expression during log growth leads to significant disturbances of cell envelope biosynthesis and cell morphology, causing cell membrane invaginations and delocalization of cell division and cell wall synthesis machinery. Cell lysis depends on mreB, lytC and lytD, suggesting expression of bsrG triggers autolysis rather than disintegration of the membrane. Additionally expression of bsrG also inhibits transcription. This chain is Small toxic protein BsrG, found in Bacillus subtilis (strain 168).